The primary structure comprises 337 residues: Large ribosomal subunit protein uL3 (337 aa).

Residues 1-29 (MARHHQPRKGSVAFSPRKRAARETPRVKS) form a disordered region.

The protein belongs to the universal ribosomal protein uL3 family. In terms of assembly, part of the 50S ribosomal subunit. Forms a cluster with proteins L14 and L24e.

In terms of biological role, one of the primary rRNA binding proteins, it binds directly near the 3'-end of the 23S rRNA, where it nucleates assembly of the 50S subunit. The polypeptide is Large ribosomal subunit protein uL3 (Methanothermobacter thermautotrophicus (strain ATCC 29096 / DSM 1053 / JCM 10044 / NBRC 100330 / Delta H) (Methanobacterium thermoautotrophicum)).